The following is a 199-amino-acid chain: MAEEQVLNTHNASILLSAANKSHYPQDDLPEIALAGRSNVGKSSFINTILGRKNLARTSSKPGKTQLLNFFNIDDKLRFVDVPGYGYAKVSKSERAKWGKMIEEYLTSRDNLRAVVSLVDLRHAPSKEDIQMYDFLKYYDIPVIVVATKADKIPRGKWNKHESVVKKALNFDKSDTFIVFSSVERIGIDDSWDAILEQV.

Positions 28-199 constitute an EngB-type G domain; it reads DLPEIALAGR…DSWDAILEQV (172 aa). GTP contacts are provided by residues 36–43, 63–67, 81–84, 148–151, and 180–182; these read GRSNVGKS, GKTQL, DVPG, TKAD, and FSS. Mg(2+) contacts are provided by Ser43 and Thr65.

It belongs to the TRAFAC class TrmE-Era-EngA-EngB-Septin-like GTPase superfamily. EngB GTPase family. Requires Mg(2+) as cofactor.

Necessary for normal cell division and for the maintenance of normal septation. In Streptococcus pyogenes serotype M1, this protein is Probable GTP-binding protein EngB.